A 252-amino-acid polypeptide reads, in one-letter code: MGRLSWQVAAAAAVGLALTLEALPWVLRWLRSRRRRPRREALFFPSQVTCTEALLRAPGAELAELPEGCPCGLPHGESALSRLLRALLAARASLDLCLFAFSSPQLGRAVQLLHQRGVRVRVVTDCDYMALNGSQIGLLRKAGIQVRHDQDPGYMHHKFAIVDKRVLITGSLNWTTQAIQNNRENVLITEDDEYVRLFLEEFERIWEQFNPTKYTFFPPKKSHGSCAPPVSRAGGRLLSWHRTCGTSSESQT.

The Mitochondrial intermembrane portion of the chain corresponds to 1-4 (MGRL). The segment at 1-39 (MGRLSWQVAAAAAVGLALTLEALPWVLRWLRSRRRRPRR) is required for mitochondrial localization. Residues 5–27 (SWQVAAAAAVGLALTLEALPWVL) form a helical membrane-spanning segment. The Cytoplasmic portion of the chain corresponds to 28–252 (RWLRSRRRRP…TCGTSSESQT (225 aa)). Residues 45 to 78 (PSQVTCTEALLRAPGAELAELPEGCPCGLPHGES) form a C3H1-type; atypical zinc finger. One can recognise a PLD phosphodiesterase domain in the interval 151–178 (DPGYMHHKFAIVDKRVLITGSLNWTTQA). Residues His156, Lys158, and Asp163 contribute to the active site.

This sequence belongs to the phospholipase D family. MitoPLD/Zucchini subfamily. As to quaternary structure, homodimer. Interacts with MOV10L1. Interacts with MIGA1 and MIGA2; possibly facilitating homodimer formation. Interacts with GK2. As to expression, predominantly expressed in testis and ovary, but not limited to gonads (at protein level). It is also found in brain, heart, pituitary gland, prostate, pancreas, thyroid, bone marrow, lung and muscle.

It localises to the mitochondrion outer membrane. Its subcellular location is the golgi apparatus. The catalysed reaction is a cardiolipin + H2O = a 1,2-diacyl-sn-glycero-3-phospho-(1'-sn-glycerol) + a 1,2-diacyl-sn-glycero-3-phosphate + H(+). With respect to regulation, MYC stimulates its phospholipase activity. MIGA1 and MIGA2 increase PLD6 self-association affinity and affects the homodimer conformation facilitating its phospholipase activity over the nuclease activity. Single stranded DNA (ssDNA) hydrolase activity does not depend upon, but is stimulated by the presence of Ca(2+) and Mn(2+). In terms of biological role, presents phospholipase and nuclease activities, depending on the different physiological conditions. Interaction with Mitoguardin (MIGA1 or MIGA2) affects the dimer conformation, facilitating the lipase activity over the nuclease activity. Plays a key role in mitochondrial fusion and fission via its phospholipase activity. In its phospholipase role, it uses the mitochondrial lipid cardiolipin as substrate to generate phosphatidate (PA or 1,2-diacyl-sn-glycero-3-phosphate), a second messenger signaling lipid. Production of PA facilitates Mitofusin-mediated fusion, whereas the cleavage of PA by the Lipin family of phosphatases produces diacylgycerol (DAG) which promotes mitochondrial fission. Both Lipin and DAG regulate mitochondrial dynamics and membrane fusion/fission, important processes for adapting mitochondrial metabolism to changes in cell physiology. Mitochondrial fusion enables cells to cope with the increased nucleotide demand during DNA synthesis. Mitochondrial function and dynamics are closely associated with biological processes such as cell growth, proliferation, and differentiation. Mediator of MYC activity, promotes mitochondrial fusion and activates AMPK which in turn inhibits YAP/TAZ, thereby inducing cell growth and proliferation. The endonuclease activity plays a critical role in PIWI-interacting RNA (piRNA) biogenesis during spermatogenesis. Implicated in spermatogenesis and sperm fertility in testicular germ cells, its single strand-specific nuclease activity is critical for the biogenesis/maturation of PIWI-interacting RNA (piRNA). MOV10L1 selectively binds to piRNA precursors and funnels them to the endonuclease that catalyzes the first cleavage step of piRNA processing to generate piRNA intermediate fragments that are subsequently loaded to Piwi proteins. Cleaves either DNA or RNA substrates with similar affinity, producing a 5' phosphate end, in this way it participates in the processing of primary piRNA transcripts. piRNAs provide essential protection against the activity of mobile genetic elements. piRNA-mediated transposon silencing is thus critical for maintaining genome stability, in particular in germline cells when transposons are mobilized as a consequence of wide-spread genomic demethylation. PA may act as signaling molecule in the recognition/transport of the precursor RNAs of primary piRNAs. Interacts with tesmin in testes, suggesting a role in spermatogenesis via association with its interacting partner. In Homo sapiens (Human), this protein is Mitochondrial cardiolipin hydrolase (PLD6).